Here is an 867-residue protein sequence, read N- to C-terminus: Leucine--tRNA ligase (867 aa).

The 'HIGH' region signature appears at Pro43–His53. Positions Lys627–Ser631 match the 'KMSKS' region motif. Lys630 contributes to the ATP binding site.

The protein belongs to the class-I aminoacyl-tRNA synthetase family.

Its subcellular location is the cytoplasm. The catalysed reaction is tRNA(Leu) + L-leucine + ATP = L-leucyl-tRNA(Leu) + AMP + diphosphate. This chain is Leucine--tRNA ligase, found in Phenylobacterium zucineum (strain HLK1).